A 209-amino-acid chain; its full sequence is Casparian strip membrane protein 1 (209 aa).

The Cytoplasmic segment spans residues 1-46; sequence MEKSESTKIDVVETNKERKGKAPLLGKAPVVAAAVVHAKGGGAKRG. A helical membrane pass occupies residues 47 to 67; that stretch reads IAIFDLILRIAAFASALGAAV. Topologically, residues 68 to 96 are extracellular; the sequence is AMATTEETLPFFTQFFQFEASYDDLPTFT. Residues 97-117 form a helical membrane-spanning segment; that stretch reads FFVVAMAIVVAYLVLSVPFSI. Residues 118–129 are Cytoplasmic-facing; that stretch reads VCIVRPHAVVPR. A helical transmembrane segment spans residues 130–150; the sequence is LLLIIFDTVIIALTTGAAGSS. Topologically, residues 151 to 179 are extracellular; the sequence is AAIVYLAHNGNQDANWLAICQQFGDFCQR. Residues 180-200 form a helical membrane-spanning segment; that stretch reads VSGAVVAAFVTVVILIFLVVL. The Cytoplasmic segment spans residues 201 to 209; it reads SASALRRHH.

Belongs to the Casparian strip membrane proteins (CASP) family. As to quaternary structure, homodimer and heterodimers.

The protein resides in the cell membrane. In terms of biological role, regulates membrane-cell wall junctions and localized cell wall deposition. Required for establishment of the Casparian strip membrane domain (CSD) and the subsequent formation of Casparian strips, a cell wall modification of the root endodermis that determines an apoplastic barrier between the intraorganismal apoplasm and the extraorganismal apoplasm and prevents lateral diffusion. The polypeptide is Casparian strip membrane protein 1 (Nicotiana tabacum (Common tobacco)).